The primary structure comprises 625 residues: Protein LEO1 homolog (625 aa).

2 disordered regions span residues 1 to 214 (MVKG…DMVL) and 415 to 625 (EREK…SDED). Composition is skewed to acidic residues over residues 40 to 55 (DEAE…GEAE) and 63 to 80 (EAES…PGES). Basic and acidic residues-rich tracts occupy residues 97 to 113 (SEAR…EHGG), 121 to 137 (QEVV…KHYE), and 182 to 197 (EYVR…RSPI). S203 is modified (phosphoserine). Positions 415–425 (EREKEKREKAE) are enriched in basic and acidic residues. A coiled-coil region spans residues 415–539 (EREKEKREKA…ETEEEEEEKS (125 aa)). The segment covering 426-436 (SQNLKASTKLS) has biased composition (polar residues). Residues 471–491 (YRSNRGYEEDLEAEAQRERRI) show a composition bias toward basic and acidic residues. Over residues 492–501 (LNAKKSHKGI) the composition is skewed to basic residues. Acidic residues predominate over residues 523–537 (EREESEYETEEEEEE). Positions 538-547 (KSPARGRGKD) are enriched in basic and acidic residues. Phosphoserine occurs at positions 548, 570, 600, 605, and 622. The segment covering 548 to 561 (SEDEYEEDAEEDEE) has biased composition (acidic residues).

This sequence belongs to the LEO1 family. Component of the nuclear PAF1 complex (PAF1C), which consists of VIP2/ELF7/PAF1, VIP3/SKI8/WDR61, VIP4/LEO1, VIP5/RTF1, VIP6/ELF8/CTR9 and CDC73. Interacts with VIP3 and VIP6. In terms of tissue distribution, expressed in roots, shoot apices, stems, cauline leaves, inflorescence apices and flowers.

The protein localises to the nucleus. Functionally, component of the PAF1 complex (PAF1C) which is involved in histone modifications such as methylation on histone H3 'Lys-4' (H3K4me3). Involved in regulation of flowering time. Required for the expression of the flowering repressor and MADS box gene FLC. Involved in the control of seed dormancy and germination. In Arabidopsis thaliana (Mouse-ear cress), this protein is Protein LEO1 homolog.